We begin with the raw amino-acid sequence, 137 residues long: ATP synthase epsilon chain, chloroplastic (137 aa).

It belongs to the ATPase epsilon chain family. In terms of assembly, F-type ATPases have 2 components, CF(1) - the catalytic core - and CF(0) - the membrane proton channel. CF(1) has five subunits: alpha(3), beta(3), gamma(1), delta(1), epsilon(1). CF(0) has three main subunits: a, b and c.

Its subcellular location is the plastid. It is found in the chloroplast thylakoid membrane. In terms of biological role, produces ATP from ADP in the presence of a proton gradient across the membrane. This Bigelowiella natans (Pedinomonas minutissima) protein is ATP synthase epsilon chain, chloroplastic.